Reading from the N-terminus, the 607-residue chain is Serine/threonine-protein kinase sid2 (607 aa).

Phosphoserine is present on residues S56, S60, S65, and S86. Basic and acidic residues predominate over residues 93-108; it reads DRSGELSYKDNNHWSD. Residues 93 to 118 form a disordered region; sequence DRSGELSYKDNNHWSDRSSTGSPRWE. The span at 109 to 118 shows a compositional bias: polar residues; the sequence is RSSTGSPRWE. Residues 208–508 enclose the Protein kinase domain; sequence FQTITQVGQG…LKQVMQHPYF (301 aa). ATP-binding positions include 214–222 and K237; that span reads VGQGGYGSV. Y219 carries the phosphotyrosine modification. The Proton acceptor role is filled by D331. The residue at position 402 (S402) is a Phosphoserine. The region spanning 509-589 is the AGC-kinase C-terminal domain; the sequence is SKIDWKNVRT…RHQKNSHPTS (81 aa). Residues 586-607 are disordered; the sequence is HPTSSSSALSSPLSAPSFGTLL. A compositionally biased stretch (low complexity) spans 589-607; the sequence is SSSSALSSPLSAPSFGTLL.

The protein belongs to the protein kinase superfamily. Ser/Thr protein kinase family. As to quaternary structure, interacts with mob1 and cdc11.

It localises to the cytoplasm. The protein resides in the cytoskeleton. Its subcellular location is the microtubule organizing center. The protein localises to the spindle pole body. The enzyme catalyses L-seryl-[protein] + ATP = O-phospho-L-seryl-[protein] + ADP + H(+). It carries out the reaction L-threonyl-[protein] + ATP = O-phospho-L-threonyl-[protein] + ADP + H(+). In terms of biological role, part of a signaling pathway. Required for initiation of medial ring constriction and septation. The protein is Serine/threonine-protein kinase sid2 (sid2) of Schizosaccharomyces pombe (strain 972 / ATCC 24843) (Fission yeast).